We begin with the raw amino-acid sequence, 449 residues long: UDP-N-acetylmuramate--L-alanine ligase (449 aa).

Residue 121 to 127 participates in ATP binding; it reads GAHGKSS.

Belongs to the MurCDEF family.

It localises to the cytoplasm. It carries out the reaction UDP-N-acetyl-alpha-D-muramate + L-alanine + ATP = UDP-N-acetyl-alpha-D-muramoyl-L-alanine + ADP + phosphate + H(+). It functions in the pathway cell wall biogenesis; peptidoglycan biosynthesis. Cell wall formation. The sequence is that of UDP-N-acetylmuramate--L-alanine ligase from Helicobacter pylori (strain HPAG1).